Consider the following 527-residue polypeptide: L-amino-acid oxidase (527 aa).

The first 27 residues, 1 to 27, serve as a signal peptide directing secretion; that stretch reads MDLHRAPWKSSAAAAVLLLALFSGAAA. A disulfide bridge links cysteine 37 with cysteine 200. Asparagine 58 carries an N-linked (GlcNAc...) asparagine glycan. Residues 70-71, 90-91, arginine 98, 114-117, and valine 288 each bind FAD; these read VA, EA, and GAMR. A substrate-binding site is contributed by arginine 117. Residue asparagine 393 is glycosylated (N-linked (GlcNAc...) asparagine). Position 403 (tyrosine 403) interacts with substrate. FAD is bound by residues glutamate 485 and 492 to 497; that span reads AWMESA. 492–493 is a substrate binding site; that stretch reads AW.

In terms of assembly, homodimer. FAD is required as a cofactor. In terms of tissue distribution, expression mainly observed in plasma, spleen, kidney and gills with low levels detected in blood and no expression detected in brain, liver, heart, muscle or intestine (at protein level).

It localises to the secreted. The enzyme catalyses an L-alpha-amino acid + O2 + H2O = a 2-oxocarboxylate + H2O2 + NH4(+). In terms of biological role, inhibits the growth of both Gram-negative and Gram-positive bacteria. Displays strong antibacterial activity towards V.cholerae and E.tarda. Causes deformation of the surface of S.aureus and the formation of pores on the surface of E.coli. Strong antiparasitic activity is seen towards C.irritans, T.brucei and I.multifiliis. Cilia of treated theronts are lost and the macronucleus swells, inducing cell membrane rupture and efflux of the cytoplasm. The sequence is that of L-amino-acid oxidase from Siganus canaliculatus (White-spotted spinefoot).